A 152-amino-acid polypeptide reads, in one-letter code: Acidic phospholipase A2 57 (152 aa).

The N-terminal stretch at 1-21 (MYPAHLLGLLAVCVSLLGAAS) is a signal peptide. A propeptide spanning residues 22-27 (IPPLPL) is cleaved from the precursor. Disulfide bonds link cysteine 38–cysteine 104, cysteine 54–cysteine 151, cysteine 56–cysteine 72, cysteine 71–cysteine 132, cysteine 78–cysteine 125, cysteine 88–cysteine 118, and cysteine 111–cysteine 123. Positions 55, 57, and 59 each coordinate Ca(2+). Histidine 75 is an active-site residue. A Ca(2+)-binding site is contributed by aspartate 76. Aspartate 126 is a catalytic residue.

The protein belongs to the phospholipase A2 family. Group I subfamily. D49 sub-subfamily. The cofactor is Ca(2+). Expressed by the venom gland.

The protein resides in the secreted. It carries out the reaction a 1,2-diacyl-sn-glycero-3-phosphocholine + H2O = a 1-acyl-sn-glycero-3-phosphocholine + a fatty acid + H(+). PLA2 catalyzes the calcium-dependent hydrolysis of the 2-acyl groups in 3-sn-phosphoglycerides. This chain is Acidic phospholipase A2 57, found in Hydrophis hardwickii (Hardwick's spine-bellied seasnake).